Reading from the N-terminus, the 123-residue chain is MPTVNQLIRKPRIAPVKRNKVPAMQQNPQKRGVCTRVYTTTPKKPNSALRKVAKIRLTNGFEVIGYIPGEGHNLQEHSVVMIRGGRVKDLPGVRYHIIRGVLDTQGVKNRKQRRSKYGAKRPK.

Position 89 is a 3-methylthioaspartic acid (Asp89).

The protein belongs to the universal ribosomal protein uS12 family. As to quaternary structure, part of the 30S ribosomal subunit. Contacts proteins S8 and S17. May interact with IF1 in the 30S initiation complex.

Functionally, with S4 and S5 plays an important role in translational accuracy. In terms of biological role, interacts with and stabilizes bases of the 16S rRNA that are involved in tRNA selection in the A site and with the mRNA backbone. Located at the interface of the 30S and 50S subunits, it traverses the body of the 30S subunit contacting proteins on the other side and probably holding the rRNA structure together. The combined cluster of proteins S8, S12 and S17 appears to hold together the shoulder and platform of the 30S subunit. The sequence is that of Small ribosomal subunit protein uS12 from Mesorhizobium japonicum (strain LMG 29417 / CECT 9101 / MAFF 303099) (Mesorhizobium loti (strain MAFF 303099)).